Consider the following 265-residue polypeptide: Aquaporin-5 (265 aa).

Residues 1 to 12 are Cytoplasmic-facing; the sequence is MKKEVCSVAFLK. The helical transmembrane segment at 13 to 33 threads the bilayer; that stretch reads AVFAEFLATLIFVFFGLGSAL. Residues 34 to 39 are Extracellular-facing; it reads KWPSAL. The chain crosses the membrane as a helical span at residues 40–60; it reads PTILQIALAFGLAIGTLAQAL. Over 61–65 the chain is Cytoplasmic; the sequence is GPVSG. Residues 66-74 constitute an intramembrane region (discontinuously helical); it reads GHINPAITL. The short motif at 69-71 is the NPA 1 element; sequence NPA. Topologically, residues 75–87 are cytoplasmic; the sequence is ALLVGNQISLLRA. A helical transmembrane segment spans residues 88–108; that stretch reads FFYVAAQLVGAIAGAGILYGV. The Extracellular segment spans residues 109 to 126; the sequence is APLNARGNLAVNALNNNT. N124 and N125 each carry an N-linked (GlcNAc...) asparagine glycan. The helical transmembrane segment at 127–147 threads the bilayer; sequence TQGQAMVVELILTFQLALCIF. Topologically, residues 148–158 are cytoplasmic; that stretch reads ASTDSRRTSPV. Residues 159 to 179 form a helical membrane-spanning segment; that stretch reads GSPALSIGLSVTLGHLVGIYF. T180 is a topological domain (extracellular). The discontinuously helical intramembrane region spans 181 to 191; sequence GCSMNPARSFG. The NPA 2 motif lies at 185 to 187; the sequence is NPA. Over 192–203 the chain is Extracellular; that stretch reads PAVVMNRFSPAH. Residues 204 to 224 traverse the membrane as a helical segment; it reads WVFWVGPIVGAVLAAILYFYL. Topologically, residues 225–265 are cytoplasmic; it reads LFPNSLSLSERVAIIKGTYEPDEDWEEQREERKKTMELTTR.

The protein belongs to the MIP/aquaporin (TC 1.A.8) family. As to quaternary structure, homotetramer; each monomer provides an independent water pore. Interacts with TRPV4; the interaction is probably indirect and regulates TRPV4 activation by hypotonicity. Detected in skin eccrine sweat glands, at the apical cell membrane and at intercellular canaliculi (at protein level).

It is found in the apical cell membrane. It localises to the cell membrane. The protein resides in the cytoplasmic vesicle membrane. The enzyme catalyses H2O(in) = H2O(out). Aquaporins form homotetrameric transmembrane channels, with each monomer independently mediating water transport across the plasma membrane along its osmotic gradient. Plays an important role in fluid secretion in salivary glands. Required for TRPV4 activation by hypotonicity. Together with TRPV4, controls regulatory volume decrease in salivary epithelial cells. Seems to play a redundant role in water transport in the eye, lung and in sweat glands. This Homo sapiens (Human) protein is Aquaporin-5.